We begin with the raw amino-acid sequence, 352 residues long: Plant intracellular Ras-group-related LRR protein 1 (352 aa).

A disordered region spans residues 1–25 (MREMGEKRRRGHLNPAGFAGGLHDH). LRR repeat units lie at residues 29–52 (KNEE…TMSL), 53–75 (GQVT…IIAR), 77–99 (LNVV…IGCL), 100–122 (SKLK…IEEC), 124–146 (ALEE…GFEL), 147–169 (HSLR…TSHM), 171–192 (ALRA…LENL), 195–217 (LEAL…VGLL), 218–241 (ASLR…GCLT), and 243–263 (LARF…VVEQ). The GVYW; degenerate motif lies at 264 to 271 (GLDAMRAY).

Belongs to the SHOC2 family. As to expression, widely expressed but at a lower level in seedlings and stems.

Leucine-rich repeat protein that likely mediates protein interactions, possibly in the context of signal transduction. The sequence is that of Plant intracellular Ras-group-related LRR protein 1 (IRL1) from Oryza sativa subsp. japonica (Rice).